A 176-amino-acid polypeptide reads, in one-letter code: MKDLVPAWIDGALRPVGKLEAHQRGLRHKAVSVFVMRGPETLIQRRALDKYHTPGLWANTCCTHPLWDESPADCAVRRLREELGITGLYPAHRDRIEYRADVGNGLIEHEVVDLFIAEAPANLKVAPNPEEVAEVKWVDLYELNAQVKRRPERYTPWLRIYLAEHSERIFGTVATS.

Histidine 22 and histidine 28 together coordinate Mn(2+). In terms of domain architecture, Nudix hydrolase spans 26-160; it reads LRHKAVSVFV…PERYTPWLRI (135 aa). Residue cysteine 62 is part of the active site. Histidine 64 serves as a coordination point for Mn(2+). Residue glutamate 82 coordinates Mg(2+). Mn(2+) contacts are provided by glutamate 108 and glutamate 110. Residue glutamate 110 is part of the active site.

It belongs to the IPP isomerase type 1 family. Mg(2+) serves as cofactor. Requires Mn(2+) as cofactor.

It is found in the cytoplasm. It catalyses the reaction isopentenyl diphosphate = dimethylallyl diphosphate. It participates in isoprenoid biosynthesis; dimethylallyl diphosphate biosynthesis; dimethylallyl diphosphate from isopentenyl diphosphate: step 1/1. The protein operates within porphyrin-containing compound metabolism; chlorophyll biosynthesis. Catalyzes the 1,3-allylic rearrangement of the homoallylic substrate isopentenyl (IPP) to its highly electrophilic allylic isomer, dimethylallyl diphosphate (DMAPP). This is Isopentenyl-diphosphate Delta-isomerase from Dinoroseobacter shibae (strain DSM 16493 / NCIMB 14021 / DFL 12).